Consider the following 157-residue polypeptide: Probable succinate transporter subunit YjjB (157 aa).

Transmembrane regions (helical) follow at residues 6–26 (FFMA…GFAM), 55–75 (AGFN…SIGI), 87–107 (VFTV…TAMI), and 129–149 (FLKA…PGLW).

Belongs to the ThrE exporter (TC 2.A.79) family. In terms of assembly, the transporter is composed of YjjB and YjjP.

Its subcellular location is the cell inner membrane. Its function is as follows. Involved in succinate export with YjjP. Both proteins are required for export. The polypeptide is Probable succinate transporter subunit YjjB (Salmonella arizonae (strain ATCC BAA-731 / CDC346-86 / RSK2980)).